The sequence spans 506 residues: Pentatricopeptide repeat-containing protein At5g18475 (506 aa).

Positions 28–48 (SEKKKKPSPPPESSISPVETN) are disordered. PPR repeat units lie at residues 88–122 (NNAT…TCRF), 123–158 (QESL…RVKP), 159–194 (SLNA…GLQP), 195–229 (NTCI…GISY), 231–266 (NSIT…GISP), 267–301 (DPVT…GCNP), 302–336 (NVYN…GLKL), 337–371 (DTVG…RCRA), 372–406 (DTLT…GVHL), 407–441 (NKGS…GIWP), 442–476 (HHAT…GLIP), and 477–506 (GPKS…SLVS).

This sequence belongs to the PPR family. P subfamily.

This is Pentatricopeptide repeat-containing protein At5g18475 from Arabidopsis thaliana (Mouse-ear cress).